A 119-amino-acid polypeptide reads, in one-letter code: Large ribosomal subunit protein uL14 (119 aa).

This sequence belongs to the universal ribosomal protein uL14 family. Part of the 50S ribosomal subunit. Forms a cluster with proteins L3 and L19. In the 70S ribosome, L14 and L19 interact and together make contacts with the 16S rRNA in bridges B5 and B8.

Binds to 23S rRNA. Forms part of two intersubunit bridges in the 70S ribosome. This Anaplasma phagocytophilum (strain HZ) protein is Large ribosomal subunit protein uL14.